Reading from the N-terminus, the 84-residue chain is Small ribosomal subunit protein uS17 (84 aa).

Belongs to the universal ribosomal protein uS17 family. In terms of assembly, part of the 30S ribosomal subunit.

In terms of biological role, one of the primary rRNA binding proteins, it binds specifically to the 5'-end of 16S ribosomal RNA. This chain is Small ribosomal subunit protein uS17, found in Clostridioides difficile (strain 630) (Peptoclostridium difficile).